The sequence spans 334 residues: MNAVTEGRKVLLEIADLKVHFEIKDGKQWFWQPPKTLKAVDGVTLRLYEGETLGVVGESGCGKSTFARAIIGLVKATDGHVAWLGKELLGMKPDEWRAVRSDIQMIFQDPLASLNPRMTIGEIIAEPLRTYHPKMSRQEVRERVKAMMLKVGLLPNLINRYPHEFSGGQCQRIGIARALILEPKLIICDEPVSALDVSIQAQVVNLLQQLQREMGLSLIFIAHDLAVVKHISDRVLVMYLGHAVELGTYDEVYHNPLHPYTRALMSAVPIPDPDLEKNKTIQLLEGELPSPINPPSGCVFRTRCPIAGPECAKTRPVLEGSFRHSVSCLKVDPL.

An ABC transporter domain is found at 12 to 265 (LEIADLKVHF…PLHPYTRALM (254 aa)). 57-64 (GESGCGKS) serves as a coordination point for ATP.

Belongs to the ABC transporter superfamily. As to quaternary structure, the complex is composed of two ATP-binding proteins (OppD and OppF), two transmembrane proteins (OppB and OppC) and a solute-binding protein (OppA or MppA).

It is found in the cell inner membrane. It carries out the reaction a [peptide](out) + ATP + H2O = a [peptide](in) + ADP + phosphate + H(+). The enzyme catalyses L-alanyl-gamma-D-glutamyl-meso-2,6-diaminopimelate(out) + ATP + H2O = L-alanyl-gamma-D-glutamyl-meso-2,6-diaminopimelate(in) + ADP + phosphate + H(+). Functionally, part of the ABC transporter complex OppABCDF involved in the uptake of oligopeptides and of the ABC transporter complex MppA-OppBCDF involved in the uptake of the cell wall murein tripeptide L-alanyl-gamma-D-glutamyl-meso-diaminopimelate. Probably responsible for energy coupling to the transport system. Plays an important nutritional role and is involved in the recycling of cell wall peptides. This is Oligopeptide transport ATP-binding protein OppF (oppF) from Escherichia coli (strain K12).